We begin with the raw amino-acid sequence, 318 residues long: Phosphoenolpyruvate transferase (318 aa).

Residue Asp50 coordinates 7,8-didemethyl-8-hydroxy-5-deazariboflavin.

It belongs to the CofD family. As to quaternary structure, homodimer. Requires Mg(2+) as cofactor.

The catalysed reaction is enolpyruvoyl-2-diphospho-5'-guanosine + 7,8-didemethyl-8-hydroxy-5-deazariboflavin = dehydro coenzyme F420-0 + GMP + H(+). The protein operates within cofactor biosynthesis; coenzyme F420 biosynthesis. Catalyzes the transfer of the phosphoenolpyruvate moiety from enoylpyruvoyl-2-diphospho-5'-guanosine (EPPG) to 7,8-didemethyl-8-hydroxy-5-deazariboflavin (FO) with the formation of dehydro coenzyme F420-0 and GMP. The sequence is that of Phosphoenolpyruvate transferase from Streptomyces griseus subsp. griseus (strain JCM 4626 / CBS 651.72 / NBRC 13350 / KCC S-0626 / ISP 5235).